The primary structure comprises 314 residues: Transcriptional activator RhrA (314 aa).

The region spanning 210 to 310 (ASIKMRVEQN…GVRPSDLRRL (101 aa)) is the HTH araC/xylS-type domain. 2 consecutive DNA-binding regions (H-T-H motif) follow at residues 228-249 (TDVA…SREG) and 277-300 (ISQI…RSRY).

In terms of biological role, transcriptional activator of the rhizobactin regulon. The polypeptide is Transcriptional activator RhrA (rhrA) (Rhizobium meliloti (strain 1021) (Ensifer meliloti)).